Reading from the N-terminus, the 524-residue chain is Nucleobase-ascorbate transporter 2 (524 aa).

12 consecutive transmembrane segments (helical) span residues 41 to 61 (YILALGTAVMIPSILVPMMGG), 69 to 89 (VVQTLLFLQGVNTLLQTLFGT), 91 to 111 (LPTVIGGSYAFMVPIISIIHD), 133 to 153 (GAIIVASSVQIILGFSQMWAI), 155 to 175 (SRFFSPIGMVPVIALTGFGLF), 179 to 199 (FPVVGNCVEIGLPMLILFVIF), 217 to 237 (FALIIALIIVWAYAHVLTASG), 282 to 302 (AFAMMAAVLVSLIESTGAFKA), 359 to 379 (RVIQISAGFMIFFSMLGKFGA), 380 to 400 (LFASIPFTIFAAVYCVLFGLV), 419 to 439 (LFIVGVSLFLGLSIPEYFRDF), and 457 to 477 (DFLNTIFLSSPMVALMVAVFL).

Belongs to the nucleobase:cation symporter-2 (NCS2) (TC 2.A.40) family. Expressed in cotyledons 10 days after imbibition (DAI). Expressed in the minor and major veins of cotyledons and leaves, in the shoot apex and pedicels. Expressed in the root meristems, root tips and lateral root primordia.

It is found in the membrane. The polypeptide is Nucleobase-ascorbate transporter 2 (NAT2) (Arabidopsis thaliana (Mouse-ear cress)).